The sequence spans 68 residues: Protein SrnB (68 aa).

Residues 23–42 (YALIGLLAVCATVLCFSLIF) traverse the membrane as a helical segment.

Belongs to the Hok/Gef family.

It localises to the cell inner membrane. Its function is as follows. Toxic component of a type I toxin-antitoxin (TA) system. Its normal function is believed to be effective plasmid stabilization through postsegregational killing of cells that have lost the F plasmid. Promotes degradation of stable RNA in E.coli. In Escherichia coli (strain K12), this protein is Protein SrnB (srnB).